Reading from the N-terminus, the 240-residue chain is Large ribosomal subunit protein bL25 (240 aa).

Disordered stretches follow at residues 1 to 20 (MAENVLSAQKRTEQGKGPAR) and 220 to 240 (PAAGAAPAKGGEAKGGDKGKK). Residues 220-229 (PAAGAAPAKG) show a composition bias toward low complexity. A compositionally biased stretch (basic and acidic residues) spans 230–240 (GEAKGGDKGKK).

This sequence belongs to the bacterial ribosomal protein bL25 family. CTC subfamily. Part of the 50S ribosomal subunit; part of the 5S rRNA/L5/L18/L25 subcomplex. Contacts the 5S rRNA. Binds to the 5S rRNA independently of L5 and L18.

Functionally, this is one of the proteins that binds to the 5S RNA in the ribosome where it forms part of the central protuberance. This is Large ribosomal subunit protein bL25 from Anaeromyxobacter dehalogenans (strain 2CP-C).